The following is a 647-amino-acid chain: DNA ligase (647 aa).

NAD(+) is bound by residues 30-34 (DEEYD), 79-80 (SM), and Glu-105. Lys-107 functions as the N6-AMP-lysine intermediate in the catalytic mechanism. Residues Arg-128, Glu-162, and Lys-301 each contribute to the NAD(+) site. Cys-395, Cys-398, Cys-411, and Cys-416 together coordinate Zn(2+). Residues 570–647 (KSDGVIFGKT…ESAFNELVKE (78 aa)) enclose the BRCT domain.

Belongs to the NAD-dependent DNA ligase family. LigA subfamily. Requires Mg(2+) as cofactor. It depends on Mn(2+) as a cofactor.

It catalyses the reaction NAD(+) + (deoxyribonucleotide)n-3'-hydroxyl + 5'-phospho-(deoxyribonucleotide)m = (deoxyribonucleotide)n+m + AMP + beta-nicotinamide D-nucleotide.. In terms of biological role, DNA ligase that catalyzes the formation of phosphodiester linkages between 5'-phosphoryl and 3'-hydroxyl groups in double-stranded DNA using NAD as a coenzyme and as the energy source for the reaction. It is essential for DNA replication and repair of damaged DNA. This Campylobacter jejuni subsp. jejuni serotype O:2 (strain ATCC 700819 / NCTC 11168) protein is DNA ligase.